The sequence spans 323 residues: o-succinylbenzoate synthase (323 aa).

Residue K134 is the Proton donor of the active site. D162, E191, and D214 together coordinate Mg(2+). K236 acts as the Proton acceptor in catalysis.

This sequence belongs to the mandelate racemase/muconate lactonizing enzyme family. MenC type 1 subfamily. A divalent metal cation serves as cofactor.

The enzyme catalyses (1R,6R)-6-hydroxy-2-succinyl-cyclohexa-2,4-diene-1-carboxylate = 2-succinylbenzoate + H2O. The protein operates within quinol/quinone metabolism; 1,4-dihydroxy-2-naphthoate biosynthesis; 1,4-dihydroxy-2-naphthoate from chorismate: step 4/7. Its pathway is quinol/quinone metabolism; menaquinone biosynthesis. Converts 2-succinyl-6-hydroxy-2,4-cyclohexadiene-1-carboxylate (SHCHC) to 2-succinylbenzoate (OSB). This is o-succinylbenzoate synthase from Yersinia pestis bv. Antiqua (strain Antiqua).